Consider the following 120-residue polypeptide: Large ribosomal subunit protein bL19 (120 aa).

The protein belongs to the bacterial ribosomal protein bL19 family.

Its function is as follows. This protein is located at the 30S-50S ribosomal subunit interface and may play a role in the structure and function of the aminoacyl-tRNA binding site. This Trichormus variabilis (strain ATCC 29413 / PCC 7937) (Anabaena variabilis) protein is Large ribosomal subunit protein bL19.